The chain runs to 124 residues: Large ribosomal subunit protein bL21 (124 aa).

The protein belongs to the bacterial ribosomal protein bL21 family. As to quaternary structure, part of the 50S ribosomal subunit. Contacts protein L20.

In terms of biological role, this protein binds to 23S rRNA in the presence of protein L20. The chain is Large ribosomal subunit protein bL21 from Synechococcus sp. (strain WH7803).